The primary structure comprises 273 residues: Anthranilate synthase beta subunit 2, chloroplastic (273 aa).

The N-terminal 47 residues, Met-1–Val-47, are a transit peptide targeting the chloroplast. Residues Ala-15 to Thr-35 form a disordered region. The region spanning Pro-70 to Leu-269 is the Glutamine amidotransferase type-1 domain. Residue Gly-121–Gly-123 coordinates L-glutamine. The active-site Nucleophile is Cys-148. Residues Gln-152 and Ser-202 to Leu-203 each bind L-glutamine. Residues His-243 and Glu-245 contribute to the active site.

Heterotetramer consisting of two non-identical subunits: a beta subunit and a large alpha subunit. Expressed in roots and leaves.

It is found in the plastid. The protein resides in the chloroplast. The catalysed reaction is chorismate + L-glutamine = anthranilate + pyruvate + L-glutamate + H(+). The protein operates within amino-acid biosynthesis; L-tryptophan biosynthesis; L-tryptophan from chorismate: step 1/5. In terms of biological role, part of a heterotetrameric complex that catalyzes the two-step biosynthesis of anthranilate, an intermediate in the biosynthesis of L-tryptophan. In the first step, the glutamine-binding beta subunit of anthranilate synthase (AS) provides the glutamine amidotransferase activity which generates ammonia as a substrate that, along with chorismate, is used in the second step, catalyzed by the large alpha subunit of AS to produce anthranilate. This chain is Anthranilate synthase beta subunit 2, chloroplastic, found in Oryza sativa subsp. japonica (Rice).